Here is a 386-residue protein sequence, read N- to C-terminus: MPHTITTTDELAAYCARAATQPYVTVDTEFLRERTYFAQLCLVQVAMPGTDDTDAVLIDPLAEGLSLEPLYELFRNVNVVKVFHAARQDLEIFFVEGGLVPTPLFDTQVAAMVCGFGDQVGYETLVRRIAKANLDKSSRFTDWSRRPLSDAQKVYALADVTYLREIYEYLSAELARTDRTHWLEEELAQLTNADAYVVDPENAWKRLKLRSNSGRVVAIAQQLAAFRETYAQEKNVPRNRVLKDDALLELAGTKPKTVADLGKSRLLLRDARKGAIAEGLVAAVARGMSVPNSEIPKVQAGRDRSNLNPALADLLRVLLKAKAENAGVATKLIASSSDLDDIASGFTDGVWASGWRSEVFGADALRLLNGEVALAAKGQKVKIVEV.

The 172-residue stretch at 3–174 (HTITTTDELA…EIYEYLSAEL (172 aa)) folds into the 3'-5' exonuclease domain. Residues 213 to 294 (SGRVVAIAQQ…ARGMSVPNSE (82 aa)) form the HRDC domain.

The protein belongs to the RNase D family. A divalent metal cation serves as cofactor.

It is found in the cytoplasm. The enzyme catalyses Exonucleolytic cleavage that removes extra residues from the 3'-terminus of tRNA to produce 5'-mononucleotides.. In terms of biological role, exonuclease involved in the 3' processing of various precursor tRNAs. Initiates hydrolysis at the 3'-terminus of an RNA molecule and releases 5'-mononucleotides. This is Ribonuclease D from Jannaschia sp. (strain CCS1).